A 320-amino-acid chain; its full sequence is Putative olfactory receptor 2W5 pseudogene (320 aa).

N5 is a glycosylation site (N-linked (GlcNAc...) asparagine). 4 consecutive transmembrane segments (helical) span residues 30 to 50, 58 to 78, 98 to 118, and 140 to 160; these read VILI…LLLV, PMYF…ASIA, VAQL…LVVM, and LCLQ…FIMC. A disulfide bridge connects residues C97 and C179. The segment at 267 to 320 is disordered; the sequence is LPRSGEVPDSLLHHRHSQHQPPHLHFEEQGCEGDHEETSGVGERGWGASTRGTL. Basic and acidic residues predominate over residues 290–304; sequence LHFEEQGCEGDHEET.

This sequence belongs to the G-protein coupled receptor 1 family.

Its subcellular location is the cell membrane. In terms of biological role, odorant receptor. The chain is Putative olfactory receptor 2W5 pseudogene from Homo sapiens (Human).